A 336-amino-acid polypeptide reads, in one-letter code: uncharacterized protein (336 aa).

A signal peptide spans 1-21 (MSELVLITGITGFVASHSAEA). Lys38 contributes to the NADP(+) binding site. Thr153 carries the phosphothreonine modification. Tyr167 contacts NADP(+).

Belongs to the NAD(P)-dependent epimerase/dehydratase family. Dihydroflavonol-4-reductase subfamily.

This is an uncharacterized protein from Schizosaccharomyces pombe (strain 972 / ATCC 24843) (Fission yeast).